A 197-amino-acid chain; its full sequence is Recombination protein RecR (197 aa).

The C4-type zinc-finger motif lies at 56–71; that stretch reads CSVCGNFDTIDPCAIC. The region spanning 79–174 is the Toprim domain; the sequence is SMLCVVEDVA…TVSGLAHGVP (96 aa).

It belongs to the RecR family.

May play a role in DNA repair. It seems to be involved in an RecBC-independent recombinational process of DNA repair. It may act with RecF and RecO. The sequence is that of Recombination protein RecR from Paramagnetospirillum magneticum (strain ATCC 700264 / AMB-1) (Magnetospirillum magneticum).